A 502-amino-acid chain; its full sequence is UTP--glucose-1-phosphate uridylyltransferase 2 (502 aa).

The disordered stretch occupies residues 1–20 (MMKPDLNSPLPQSPQLQAFG). The span at 9–20 (PLPQSPQLQAFG) shows a compositional bias: polar residues. UTP contacts are provided by residues 114–117 (LNGG), K128, Q191, and G220. 116-117 (GG) is a binding site for substrate. Substrate contacts are provided by residues H221 and 249–251 (NVD). UTP is bound by residues D251 and K390.

It belongs to the UDPGP type 1 family.

It carries out the reaction alpha-D-glucose 1-phosphate + UTP + H(+) = UDP-alpha-D-glucose + diphosphate. Functionally, plays a central role as a glucosyl donor in cellular metabolic pathways. The polypeptide is UTP--glucose-1-phosphate uridylyltransferase 2 (ugpB) (Dictyostelium discoideum (Social amoeba)).